The following is a 414-amino-acid chain: Gamma-glutamyl phosphate reductase (414 aa).

It belongs to the gamma-glutamyl phosphate reductase family.

Its subcellular location is the cytoplasm. The catalysed reaction is L-glutamate 5-semialdehyde + phosphate + NADP(+) = L-glutamyl 5-phosphate + NADPH + H(+). It participates in amino-acid biosynthesis; L-proline biosynthesis; L-glutamate 5-semialdehyde from L-glutamate: step 2/2. Its function is as follows. Catalyzes the NADPH-dependent reduction of L-glutamate 5-phosphate into L-glutamate 5-semialdehyde and phosphate. The product spontaneously undergoes cyclization to form 1-pyrroline-5-carboxylate. This Clostridium beijerinckii (strain ATCC 51743 / NCIMB 8052) (Clostridium acetobutylicum) protein is Gamma-glutamyl phosphate reductase.